The primary structure comprises 199 residues: Charged multivesicular body protein 1b (199 aa).

Coiled-coil stretches lie at residues 15–42 and 178–199; these read AKEL…AIQK and TSVA…RDQV. Residues 167–199 form a disordered region; that stretch reads ELPQGQTGSVGTSVASTEQDELSQRLARLRDQV. Over residues 170-183 the composition is skewed to polar residues; that stretch reads QGQTGSVGTSVAST. The MIT-interacting motif signature appears at 186–196; it reads DELSQRLARLR.

Belongs to the SNF7 family.

It is found in the cytoplasm. Its subcellular location is the cytosol. It localises to the endosome. The protein resides in the late endosome membrane. Functionally, probable peripherally associated component of the endosomal sorting required for transport complex III (ESCRT-III) which is involved in multivesicular bodies (MVBs) formation and sorting of endosomal cargo proteins into MVBs. MVBs contain intraluminal vesicles (ILVs) that are generated by invagination and scission from the limiting membrane of the endosome and mostly are delivered to lysosomes enabling degradation of membrane proteins, such as stimulated growth factor receptors, lysosomal enzymes and lipids. In Xenopus tropicalis (Western clawed frog), this protein is Charged multivesicular body protein 1b (chmp1b).